Reading from the N-terminus, the 117-residue chain is Large ribosomal subunit protein bL20 (117 aa).

The protein belongs to the bacterial ribosomal protein bL20 family.

Functionally, binds directly to 23S ribosomal RNA and is necessary for the in vitro assembly process of the 50S ribosomal subunit. It is not involved in the protein synthesizing functions of that subunit. The sequence is that of Large ribosomal subunit protein bL20 from Geotalea uraniireducens (strain Rf4) (Geobacter uraniireducens).